Here is a 271-residue protein sequence, read N- to C-terminus: MMNSPIQAVIFDWAGTIVDFGSFAPTSIFVEAFKQGFDFEISLAEAREPMGLGKWQHIEAVGKLPTVAQRWQKQFGRPMQASDIDAIYAAFMPLQIAKVADHAAPIPHSLEVVEQIRSRGIKIGSCSGYPRQVMDVLIAAAADYGYRPDYVVATDDLAQGGRPAPFMALKNVIELGVTDVRACVKVDDALPGIEEGHNAGMWTVGLLLSGNEAGLTLEEYQHADDQTLQAARERAQAKLQQAKPHYLIDTVADLPAVLAQIEQRLLAGERP.

Aspartate 12 functions as the Nucleophile in the catalytic mechanism. Mg(2+) is bound by residues aspartate 12 and alanine 14. Lysine 54 functions as the Schiff-base intermediate with substrate in the catalytic mechanism. Position 188 (aspartate 188) interacts with Mg(2+).

The protein belongs to the HAD-like hydrolase superfamily. PhnX family. As to quaternary structure, homodimer. Mg(2+) serves as cofactor.

The catalysed reaction is phosphonoacetaldehyde + H2O = acetaldehyde + phosphate + H(+). Involved in phosphonate degradation. The protein is Phosphonoacetaldehyde hydrolase of Vibrio cholerae serotype O1 (strain ATCC 39541 / Classical Ogawa 395 / O395).